Reading from the N-terminus, the 449-residue chain is 3-phosphoshikimate 1-carboxyvinyltransferase (449 aa).

Positions 28, 29, and 33 each coordinate 3-phosphoshikimate. Phosphoenolpyruvate is bound at residue Lys-28. Phosphoenolpyruvate-binding residues include Gly-105 and Arg-133. The 3-phosphoshikimate site is built by Ser-179, Gln-181, Asp-332, and Lys-359. Gln-181 provides a ligand contact to phosphoenolpyruvate. Asp-332 serves as the catalytic Proton acceptor. Phosphoenolpyruvate is bound by residues Arg-363 and Arg-406.

This sequence belongs to the EPSP synthase family. In terms of assembly, monomer.

The protein localises to the cytoplasm. The catalysed reaction is 3-phosphoshikimate + phosphoenolpyruvate = 5-O-(1-carboxyvinyl)-3-phosphoshikimate + phosphate. The protein operates within metabolic intermediate biosynthesis; chorismate biosynthesis; chorismate from D-erythrose 4-phosphate and phosphoenolpyruvate: step 6/7. In terms of biological role, catalyzes the transfer of the enolpyruvyl moiety of phosphoenolpyruvate (PEP) to the 5-hydroxyl of shikimate-3-phosphate (S3P) to produce enolpyruvyl shikimate-3-phosphate and inorganic phosphate. The chain is 3-phosphoshikimate 1-carboxyvinyltransferase from Nitrobacter hamburgensis (strain DSM 10229 / NCIMB 13809 / X14).